A 257-amino-acid chain; its full sequence is Phosphatidylglycerol--prolipoprotein diacylglyceryl transferase (257 aa).

4 consecutive transmembrane segments (helical) span residues 8–28 (IFGL…ILAY), 48–68 (VFIV…VIFN), 84–104 (EGGL…YLMS), and 109–129 (LNFL…QAIG). Arg130 lines the a 1,2-diacyl-sn-glycero-3-phospho-(1'-sn-glycerol) pocket. 3 helical membrane passes run 169–189 (PTFL…LLIT), 196–216 (GSIF…IEGL), and 225–245 (SLRM…ILII).

The protein belongs to the Lgt family.

It is found in the cell membrane. It catalyses the reaction L-cysteinyl-[prolipoprotein] + a 1,2-diacyl-sn-glycero-3-phospho-(1'-sn-glycerol) = an S-1,2-diacyl-sn-glyceryl-L-cysteinyl-[prolipoprotein] + sn-glycerol 1-phosphate + H(+). The protein operates within protein modification; lipoprotein biosynthesis (diacylglyceryl transfer). In terms of biological role, catalyzes the transfer of the diacylglyceryl group from phosphatidylglycerol to the sulfhydryl group of the N-terminal cysteine of a prolipoprotein, the first step in the formation of mature lipoproteins. The protein is Phosphatidylglycerol--prolipoprotein diacylglyceryl transferase of Clostridium novyi (strain NT).